A 123-amino-acid polypeptide reads, in one-letter code: Proteasome assembly chaperone 4 (123 aa).

The protein belongs to the PSMG4 family. Interacts with PSMG3. Associates with alpha subunits of the 20S proteasome.

In terms of biological role, chaperone protein which promotes assembly of the 20S proteasome. The chain is Proteasome assembly chaperone 4 from Homo sapiens (Human).